Reading from the N-terminus, the 605-residue chain is MLRQYKEQIKSSPQSCGVYKMIGDKSKVLYIGKAKNLKSRLSDYLQFENLSERIRVMISQVIKVEIFITENEIEALLLEAQLIKSLKPSYNILLRDGKSYPYITISKHDYPRIAKYRGKFKKNEFHYYGPFPSAAAVKNTILSLQKAFLLRVCSDQYFSSTKRPCLEYQVKRCSAPCVDKITKDDYCKSVKQAQDTLLGRNKEVQRQLFSTMEKCSREMNYELAAVYRDRLKFLQQIQMQPMDFSFEEDADFFSVVREADLACIGVLSFRDKGNYGSIPYFIENCSDHSNDEILSTFLVNLYNPVNTPPAQIYVPDFIKDKEIIEQALYALTQKSIKVLHAKNSKERDLLNFIYNNSQHSLEQKLTDYRNNLEKLEELRKIFSLPNIPKRIEVYDNSHISGNQQVGVMIVAGQEGFLKSEYKKFTIKEEISGDDYKMMREVLTRRFSGNIKDIIPDFLLIDGGPGHVSIVQNVLEILNIKVPFACMAKGHDRNAGNERFYVPDREEFTLASDSKVMLYLQLLRNEAHRFAITSHRKKRDKQFFASQLSEISGVGSKRKKALMSHFGSVENISKASLAEIQNVPGISKGLAEIILQHVNSKKGTPK.

Positions 14–92 (QSCGVYKMIG…IKSLKPSYNI (79 aa)) constitute a GIY-YIG domain. The 36-residue stretch at 202–237 (KEVQRQLFSTMEKCSREMNYELAAVYRDRLKFLQQI) folds into the UVR domain.

The protein belongs to the UvrC family. As to quaternary structure, interacts with UvrB in an incision complex.

Its subcellular location is the cytoplasm. Functionally, the UvrABC repair system catalyzes the recognition and processing of DNA lesions. UvrC both incises the 5' and 3' sides of the lesion. The N-terminal half is responsible for the 3' incision and the C-terminal half is responsible for the 5' incision. This chain is UvrABC system protein C, found in Wolbachia pipientis subsp. Culex pipiens (strain wPip).